We begin with the raw amino-acid sequence, 364 residues long: 4-hydroxythreonine-4-phosphate dehydrogenase (364 aa).

Residues His-148 and Thr-149 each coordinate substrate. His-177, His-216, and His-301 together coordinate a divalent metal cation. Substrate-binding residues include Lys-309, Asn-318, and Arg-327.

Belongs to the PdxA family. As to quaternary structure, homodimer. It depends on Zn(2+) as a cofactor. Mg(2+) is required as a cofactor. The cofactor is Co(2+).

It is found in the cytoplasm. It catalyses the reaction 4-(phosphooxy)-L-threonine + NAD(+) = 3-amino-2-oxopropyl phosphate + CO2 + NADH. The protein operates within cofactor biosynthesis; pyridoxine 5'-phosphate biosynthesis; pyridoxine 5'-phosphate from D-erythrose 4-phosphate: step 4/5. Functionally, catalyzes the NAD(P)-dependent oxidation of 4-(phosphooxy)-L-threonine (HTP) into 2-amino-3-oxo-4-(phosphooxy)butyric acid which spontaneously decarboxylates to form 3-amino-2-oxopropyl phosphate (AHAP). This is 4-hydroxythreonine-4-phosphate dehydrogenase from Campylobacter jejuni (strain RM1221).